The sequence spans 170 residues: MVRKPNSMYRNLAKKAYTRKEYMGGIPGVKVVHFDMGNLTSEFPMEVSLVVDESCQIRHSALEAARMSINRKLNKELGRMNYHLKLRTYPHHVLRENKQATGAGADRVSQGMRLAFGKAVGTAARCQQNQKIFTVFSNPASVEKIKDALRHGGHKLPSPTHLVIEMKQES.

Belongs to the universal ribosomal protein uL16 family.

The polypeptide is Large ribosomal subunit protein uL16 (Methanospirillum hungatei JF-1 (strain ATCC 27890 / DSM 864 / NBRC 100397 / JF-1)).